Reading from the N-terminus, the 152-residue chain is Large ribosomal subunit protein uL13 (152 aa).

The protein belongs to the universal ribosomal protein uL13 family. Part of the 50S ribosomal subunit.

This protein is one of the early assembly proteins of the 50S ribosomal subunit, although it is not seen to bind rRNA by itself. It is important during the early stages of 50S assembly. The protein is Large ribosomal subunit protein uL13 of Wolbachia pipientis subsp. Culex pipiens (strain wPip).